Consider the following 106-residue polypeptide: ATP-dependent Clp protease adapter protein ClpS (106 aa).

Belongs to the ClpS family. As to quaternary structure, binds to the N-terminal domain of the chaperone ClpA.

Its function is as follows. Involved in the modulation of the specificity of the ClpAP-mediated ATP-dependent protein degradation. The chain is ATP-dependent Clp protease adapter protein ClpS from Pseudoalteromonas atlantica (strain T6c / ATCC BAA-1087).